Here is a 689-residue protein sequence, read N- to C-terminus: Beta-adrenergic receptor kinase 1 (689 aa).

Positions 1–190 are N-terminal; the sequence is MADLEAVLAD…ELNIHLTMND (190 aa). Residues 54 to 175 form the RGS domain; it reads TFEKIFSQKL…IESDKFTRFC (122 aa). A Protein kinase domain is found at 191–453; sequence FSVHRIIGRG…AQEVKESPFF (263 aa). Residues 197 to 205 and Lys-220 each bind ATP; that span reads IGRGGFGEV. Asp-317 acts as the Proton acceptor in catalysis. Positions 454–521 constitute an AGC-kinase C-terminal domain; that stretch reads RSLDWQMVFL…TISERWQQEV (68 aa). The region spanning 558–652 is the PH domain; it reads DCIMHGYMSK…WKKELRDAYR (95 aa). A Phosphoserine modification is found at Ser-670.

Belongs to the protein kinase superfamily. AGC Ser/Thr protein kinase family. GPRK subfamily. Interacts with the heterodimer formed by GNB1 and GNG2. Interacts with GIT1. Interacts with, and phosphorylates chemokine-stimulated CCR5. Interacts with ARRB1. Interacts with LPAR1 and LPAR2. Interacts with RALA in response to LPAR1 activation. ADRBK1 and RALA mutually inhibit each other's binding to LPAR1. Interacts with ADRB2.

It localises to the cytoplasm. The protein localises to the cell membrane. The protein resides in the postsynapse. Its subcellular location is the presynapse. The enzyme catalyses [beta-adrenergic receptor] + ATP = [beta-adrenergic receptor]-phosphate + ADP + H(+). In contrast to other AGC family kinases, the catalytic activity is solely regulated by the binding of substrates and ligands, not by phosphorylation of the kinase domain. In terms of biological role, specifically phosphorylates the agonist-occupied form of the beta-adrenergic and closely related receptors, probably inducing a desensitization of them. Key regulator of LPAR1 signaling. Competes with RALA for binding to LPAR1 thus affecting the signaling properties of the receptor. Desensitizes LPAR1 and LPAR2 in a phosphorylation-independent manner. Positively regulates ciliary smoothened (SMO)-dependent Hedgehog (Hh) signaling pathway by facilitating the trafficking of SMO into the cilium and the stimulation of SMO activity. Inhibits relaxation of airway smooth muscle in response to blue light. The chain is Beta-adrenergic receptor kinase 1 from Mesocricetus auratus (Golden hamster).